The following is a 388-amino-acid chain: Phosphoglycerate kinase (388 aa).

Substrate-binding positions include 21–23 (DLN), Arg-36, 59–62 (HLGR), Arg-114, and Arg-147. ATP-binding positions include Lys-198, Glu-315, and 341-344 (GGDT).

Belongs to the phosphoglycerate kinase family. As to quaternary structure, monomer.

It is found in the cytoplasm. The enzyme catalyses (2R)-3-phosphoglycerate + ATP = (2R)-3-phospho-glyceroyl phosphate + ADP. It participates in carbohydrate degradation; glycolysis; pyruvate from D-glyceraldehyde 3-phosphate: step 2/5. In Buchnera aphidicola subsp. Schizaphis graminum (strain Sg), this protein is Phosphoglycerate kinase.